The chain runs to 679 residues: Protein white (679 aa).

Residues 1–34 (MGQEDQEVLIRGGKATSTSAESLNNNNEQPYEQS) are disordered. Residues 15–34 (ATSTSAESLNNNNEQPYEQS) show a composition bias toward polar residues. The region spanning 84 to 332 (NRVKGVFCNE…FSYIGATCPT (249 aa)) is the ABC transporter domain. An ATP-binding site is contributed by 121–128 (GSSGAGKT). The next 5 membrane-spanning stretches (helical) occupy residues 427–445 (LLQT…LGQQ), 457–477 (AIFL…ITVF), 507–525 (LPLF…YPLI), 534–555 (FFTA…GYLI), and 568–586 (VGPP…FLNS). N628 and N643 each carry an N-linked (GlcNAc...) asparagine glycan. Residues 651 to 670 (FDFIGLALLIVGFRISAYIA) traverse the membrane as a helical segment.

The protein belongs to the ABC transporter superfamily. ABCG family. Eye pigment precursor importer (TC 3.A.1.204) subfamily.

The protein resides in the membrane. Functionally, may be part of a membrane-spanning permease system necessary for the transport of pigment precursors into pigment cells responsible for eye color. This chain is Protein white (W), found in Ceratitis capitata (Mediterranean fruit fly).